We begin with the raw amino-acid sequence, 122 residues long: Protein C10 (122 aa).

The protein belongs to the UPF0456 family.

It is found in the cytoplasm. The polypeptide is Protein C10 (Danio rerio (Zebrafish)).